Here is a 177-residue protein sequence, read N- to C-terminus: MLDAFSRVVVNSDAKAAYVGGSDLQALKSFIADGNKRLDSVNAIVSNASCMVSDAVSGMICENPGLISPGGNCYTNRRMAACLRDGEIILRYVSYALLAGDASVLEDRCLNGLKETYIALGVPTNSSIRAVSIMKAQAVAFITNTATERKMSFAAGDCTSLASEVASYFDRVGAAIS.

Residues Cys-50 and Cys-61 each contribute to the phycourobilin site. Asn-72 carries the post-translational modification N4-methylasparagine. Cys-82 and Cys-158 together coordinate (2R,3E)-phycoerythrobilin.

The protein belongs to the phycobiliprotein family. Heteromer of 6 alpha, 6 beta and one gamma chain. In terms of processing, contains two covalently linked phycoerythrobilin chromophores and one covalently linked phycourobilin chromophore.

It is found in the plastid. It localises to the chloroplast thylakoid membrane. In terms of biological role, light-harvesting photosynthetic bile pigment-protein from the phycobiliprotein complex. The sequence is that of B-phycoerythrin beta chain (cpeB) from Porphyridium sordidum (Red alga).